A 376-amino-acid chain; its full sequence is Transforming growth factor beta-1 proprotein (376 aa).

The N-terminal stretch at 1-22 (MRVESLLLALQCLLGFVHYSGA) is a signal peptide. The interval 23-68 (LSTCSPLDLELIKRKRIEAIRGQILSKLRLSKEPEVDEEKESQNIP) is straightjacket domain. The segment at 69 to 258 (AELISVYNST…SLPLDGNNSS (190 aa)) is arm domain. 3 N-linked (GlcNAc...) asparagine glycosylation sites follow: Asn-76, Asn-125, and Asn-167. The bowtie tail stretch occupies residues 214 to 238 (DPQKTFQLKIPGLVLVRGDTETLAV). A Cell attachment site motif is present at residues 230 to 232 (RGD). 3 disulfides stabilise this stretch: Cys-272–Cys-280, Cys-308–Cys-373, and Cys-312–Cys-375.

The protein belongs to the TGF-beta family. As to quaternary structure, latency-associated peptide: Homodimer; disulfide-linked. Latency-associated peptide: Interacts with Transforming growth factor beta-1 (TGF-beta-1) chain; interaction is non-covalent and maintains (TGF-beta-1) in a latent state; each Latency-associated peptide (LAP) monomer interacts with TGF-beta-1 in the other monomer. Transforming growth factor beta-1: Homodimer; disulfide-linked. Transforming growth factor beta-1: Interacts with TGF-beta receptors (tgfbr1 and tgfbr2), leading to signal transduction. Interacts with EFEMP2. Post-translationally, transforming growth factor beta-1 proprotein: The precursor proprotein is cleaved in the Golgi apparatus to form Transforming growth factor beta-1 (TGF-beta-1) and Latency-associated peptide (LAP) chains, which remain non-covalently linked, rendering TGF-beta-1 inactive.

It localises to the secreted. The protein resides in the extracellular space. Its subcellular location is the extracellular matrix. Functionally, transforming growth factor beta-1 proprotein: Precursor of the Latency-associated peptide (LAP) and Transforming growth factor beta-1 (TGF-beta-1) chains, which constitute the regulatory and active subunit of TGF-beta-1, respectively. In terms of biological role, required to maintain the Transforming growth factor beta-1 (TGF-beta-1) chain in a latent state during storage in extracellular matrix. Associates non-covalently with TGF-beta-1 and regulates its activation via interaction with 'milieu molecules', such as LTBP1, LRRC32/GARP and LRRC33/NRROS, that control activation of TGF-beta-1. Interaction with integrins (ITGAV:ITGB6 or ITGAV:ITGB8) results in distortion of the Latency-associated peptide chain and subsequent release of the active TGF-beta-1. Its function is as follows. Transforming growth factor beta-1: Multifunctional protein that regulates the growth and differentiation of various cell types and is involved in various processes, such as normal development, immune function, microglia function and responses to neurodegeneration. Activation into mature form follows different steps: following cleavage of the proprotein in the Golgi apparatus, Latency-associated peptide (LAP) and Transforming growth factor beta-1 (TGF-beta-1) chains remain non-covalently linked rendering TGF-beta-1 inactive during storage in extracellular matrix. At the same time, LAP chain interacts with 'milieu molecules', such as ltbp1, lrrc32/garp and lrrc33/nrros that control activation of TGF-beta-1 and maintain it in a latent state during storage in extracellular milieus. TGF-beta-1 is released from LAP by integrins (ITGAV:ITGB6 or ITGAV:ITGB8): integrin-binding to LAP stabilizes an alternative conformation of the LAP bowtie tail and results in distortion of the LAP chain and subsequent release of the active TGF-beta-1. Once activated following release of LAP, TGF-beta-1 acts by binding to TGF-beta receptors (tgfbr1 and tgfbr2), which transduce signal. While expressed by many cells types, TGF-beta-1 only has a very localized range of action within cell environment thanks to fine regulation of its activation by Latency-associated peptide chain (LAP) and 'milieu molecules'. Plays an important role in bone remodeling: acts as a potent stimulator of osteoblastic bone formation. Can promote either T-helper 17 cells (Th17) or regulatory T-cells (Treg) lineage differentiation in a concentration-dependent manner. Can induce epithelial-to-mesenchymal transition (EMT) and cell migration in various cell types. The chain is Transforming growth factor beta-1 proprotein (tgfb1) from Cyprinus carpio (Common carp).